The primary structure comprises 137 residues: Protein archease (137 aa).

Ca(2+)-binding residues include Asp11, Asp136, and Ile137.

The protein belongs to the archease family.

Functionally, activates the tRNA-splicing ligase complex by facilitating the enzymatic turnover of catalytic subunit RtcB. Acts by promoting the guanylylation of RtcB, a key intermediate step in tRNA ligation. Can also alter the NTP specificity of RtcB such that ATP, dGTP or ITP is used efficiently. In Archaeoglobus fulgidus (strain ATCC 49558 / DSM 4304 / JCM 9628 / NBRC 100126 / VC-16), this protein is Protein archease.